Here is a 258-residue protein sequence, read N- to C-terminus: Tryptophan synthase alpha chain (258 aa).

Residues Glu47 and Asp58 each act as proton acceptor in the active site.

It belongs to the TrpA family. Tetramer of two alpha and two beta chains.

The enzyme catalyses (1S,2R)-1-C-(indol-3-yl)glycerol 3-phosphate + L-serine = D-glyceraldehyde 3-phosphate + L-tryptophan + H2O. It participates in amino-acid biosynthesis; L-tryptophan biosynthesis; L-tryptophan from chorismate: step 5/5. The alpha subunit is responsible for the aldol cleavage of indoleglycerol phosphate to indole and glyceraldehyde 3-phosphate. The protein is Tryptophan synthase alpha chain of Bacillus mycoides (strain KBAB4) (Bacillus weihenstephanensis).